Consider the following 187-residue polypeptide: HTH-type transcriptional regulator NfxB (187 aa).

The segment at residues 26-45 (LKELAEAAGVSKATLHRFCG) is a DNA-binding region (H-T-H motif).

In terms of biological role, confers resistance to guinolones. May negatively regulate the expression of genes that are associated with cell permeability to drugs. This chain is HTH-type transcriptional regulator NfxB (nfxB), found in Pseudomonas aeruginosa (strain ATCC 15692 / DSM 22644 / CIP 104116 / JCM 14847 / LMG 12228 / 1C / PRS 101 / PAO1).